Reading from the N-terminus, the 233-residue chain is Large ribosomal subunit protein uL1 (233 aa).

The protein belongs to the universal ribosomal protein uL1 family. In terms of assembly, part of the 50S ribosomal subunit.

In terms of biological role, binds directly to 23S rRNA. The L1 stalk is quite mobile in the ribosome, and is involved in E site tRNA release. Protein L1 is also a translational repressor protein, it controls the translation of the L11 operon by binding to its mRNA. The polypeptide is Large ribosomal subunit protein uL1 (Shewanella frigidimarina (strain NCIMB 400)).